The following is a 708-amino-acid chain: MEANHQRNDLGLVALTMLAQYHNISLNPEEIKHKFDLDGNGLSLTSWLLAAKSLALKAKHIKKEISRLHLVNLPALVWQDNGKHFLLVKVDTDNNRYLTYNLEQDAPQILSQDEFEACYQGQLILVTSRASVVGQLAKFDFTWFIPAVIKYRKIFLETLIVSIFLQIFALITPLFFQVVMDKVLVHRGFSTLNIITVALAIVIIFEIVLSGLRTYVFSHSTSRIDVELGAKLFRHLLSLPISYFENRRVGDTVARVRELDQIRNFLTGQALTSVLDLLFSFIFFAVMWYYSPKLTLVILGSLPCYILWSIFISPILRRRLDEKFARSADNQAFLVESVTAINMIKAMAVAPQMTDTWDKQLASYVSSSFRVTVLATIGQQGVQLIQKTVMVINLWLGAHLVISGDLSIGQLIAFNMLSGQVIAPVIRLAQLWQDFQQVGISVTRLGDVLNSPTEQYQGKLSLPEIQGDIAFKNIRFRYKPDAPTILNNVNLEIKKGEVIGIVGRSGSGKSTLTKLLQRFYIPENGQVLIDGHDLALADPNWLRRQIGVVLQDNVLLNRSIRENIALSEPGMSMERVIYAAKLAGAHDFISELREGYNTIVGEQGAGLSGGQRQRIAIARALVNNPKILIFDEATSALDYESEHIIMQNMQKICQGRTVILIAHRLSTVKNADRIIVMEKGEIVEQGKHHELLQNSNGLYSYLHQLQLN.

Positions Met1–Val126 constitute a Peptidase C39 domain. In terms of domain architecture, ABC transmembrane type-1 spans Phe155–Gln437. The next 5 membrane-spanning stretches (helical) occupy residues Leu159–Val179, Leu192–Leu212, Ala270–Tyr290, Leu296–Leu316, and Val389–Gly409. The 236-residue stretch at Ile469–Gln704 folds into the ABC transporter domain. Gly503–Ser510 lines the ATP pocket.

This sequence belongs to the ABC transporter superfamily. Protein-1 exporter (TC 3.A.1.109) family. In terms of assembly, homodimer.

Its subcellular location is the cell inner membrane. The catalysed reaction is ATP + H2O + proteinSide 1 = ADP + phosphate + proteinSide 2.. Its function is as follows. Part of the ABC transporter complex LktBD involved in leukotoxin export. Transmembrane domains (TMD) form a pore in the inner membrane and the ATP-binding domain (NBD) is responsible for energy generation. This Mannheimia glucosida protein is Leukotoxin translocation ATP-binding protein LktB (lktB).